Here is an 83-residue protein sequence, read N- to C-terminus: Putative potassium channel toxin Ts20 (83 aa).

The first 18 residues, 1 to 18, serve as a signal peptide directing secretion; that stretch reads MKLDIVLIMFVTFSTTLA.

In terms of processing, contains 3 disulfide bonds. Expressed by the venom gland.

Its subcellular location is the secreted. Functionally, reversibly inhibits potassium channels. The protein is Putative potassium channel toxin Ts20 of Tityus serrulatus (Brazilian scorpion).